Here is a 352-residue protein sequence, read N- to C-terminus: Photosystem II protein D1 (352 aa).

T2 bears the N-acetylthreonine mark. Residue T2 is modified to Phosphothreonine. Transmembrane regions (helical) follow at residues 29 to 46 (YIGW…TATS), 118 to 133 (HFLL…EWEL), and 142 to 156 (WIAV…AASA). H118 serves as a coordination point for chlorophyll a. Residue Y126 coordinates pheophytin a. Positions 170 and 189 each coordinate [CaMn4O5] cluster. A helical membrane pass occupies residues 197 to 218 (FHMLGVAGVFGGSLFSAMHGSL). Position 198 (H198) interacts with chlorophyll a. A quinone contacts are provided by residues H215 and 264-265 (SF). Fe cation is bound at residue H215. H272 is a binding site for Fe cation. Residues 274 to 288 (FLAAWPVIGIWFTAL) traverse the membrane as a helical segment. 4 residues coordinate [CaMn4O5] cluster: H332, E333, D342, and A344. The propeptide occupies 345–352 (STNSSSNN).

This sequence belongs to the reaction center PufL/M/PsbA/D family. As to quaternary structure, PSII is composed of 1 copy each of membrane proteins PsbA, PsbB, PsbC, PsbD, PsbE, PsbF, PsbH, PsbI, PsbJ, PsbK, PsbL, PsbM, PsbT, PsbX, PsbY, PsbZ, Psb30/Ycf12, at least 3 peripheral proteins of the oxygen-evolving complex and a large number of cofactors. It forms dimeric complexes. The D1/D2 heterodimer binds P680, chlorophylls that are the primary electron donor of PSII, and subsequent electron acceptors. It shares a non-heme iron and each subunit binds pheophytin, quinone, additional chlorophylls, carotenoids and lipids. D1 provides most of the ligands for the Mn4-Ca-O5 cluster of the oxygen-evolving complex (OEC). There is also a Cl(-1) ion associated with D1 and D2, which is required for oxygen evolution. The PSII complex binds additional chlorophylls, carotenoids and specific lipids. serves as cofactor. Post-translationally, tyr-161 forms a radical intermediate that is referred to as redox-active TyrZ, YZ or Y-Z. C-terminally processed by CTPA; processing is essential to allow assembly of the oxygen-evolving complex and thus photosynthetic growth.

It is found in the plastid. Its subcellular location is the chloroplast thylakoid membrane. The enzyme catalyses 2 a plastoquinone + 4 hnu + 2 H2O = 2 a plastoquinol + O2. This is one of the two reaction center proteins of photosystem II. Functionally, photosystem II (PSII) is a light-driven water:plastoquinone oxidoreductase that uses light energy to abstract electrons from H(2)O, generating O(2) and a proton gradient subsequently used for ATP formation. It consists of a core antenna complex that captures photons, and an electron transfer chain that converts photonic excitation into a charge separation. The D1/D2 (PsbA/PsbD) reaction center heterodimer binds P680, the primary electron donor of PSII as well as several subsequent electron acceptors. This chain is Photosystem II protein D1, found in Chlamydomonas reinhardtii (Chlamydomonas smithii).